The primary structure comprises 355 residues: Small ribosomal subunit biogenesis GTPase RsgA 1 (355 aa).

Residues 103–262 (GRVADRQAIA…LIDTPGVREF (160 aa)) enclose the CP-type G domain. GTP contacts are provided by residues 152–155 (NKAD) and 204–212 (GSSGVGKSS). Residues Cys285, Cys290, His292, and Cys298 each contribute to the Zn(2+) site.

It belongs to the TRAFAC class YlqF/YawG GTPase family. RsgA subfamily. In terms of assembly, monomer. Associates with 30S ribosomal subunit, binds 16S rRNA. Requires Zn(2+) as cofactor.

It localises to the cytoplasm. In terms of biological role, one of several proteins that assist in the late maturation steps of the functional core of the 30S ribosomal subunit. Helps release RbfA from mature subunits. May play a role in the assembly of ribosomal proteins into the subunit. Circularly permuted GTPase that catalyzes slow GTP hydrolysis, GTPase activity is stimulated by the 30S ribosomal subunit. In Bacteroides thetaiotaomicron (strain ATCC 29148 / DSM 2079 / JCM 5827 / CCUG 10774 / NCTC 10582 / VPI-5482 / E50), this protein is Small ribosomal subunit biogenesis GTPase RsgA 1.